A 63-amino-acid polypeptide reads, in one-letter code: Cecropin-2 (63 aa).

The signal sequence occupies residues 1 to 21 (MNFNKVLVLLAVIFAVFAGQT). Positions 22 to 23 (EA) are excised as a propeptide. The residue at position 62 (lysine 62) is a Lysine amide.

Belongs to the cecropin family.

It localises to the secreted. Cecropins have lytic and antibacterial activity against several Gram-positive and Gram-negative bacteria. The protein is Cecropin-2 (CEC2) of Ceratitis capitata (Mediterranean fruit fly).